Consider the following 61-residue polypeptide: Metallothionein-2 (61 aa).

An N-acetylmethionine modification is found at Met1. A beta region spans residues Met1–Cys29. Residues Cys5, Cys7, Cys13, Cys15, Cys19, Cys21, Cys24, Cys26, Cys29, Cys33, Cys34, Cys36, Cys37, Cys41, Cys44, Cys48, Cys50, and Cys57 each contribute to the a divalent metal cation site. The interval Lys30–Ala61 is alpha. Residue Ser58 is modified to Phosphoserine. A divalent metal cation is bound by residues Cys59 and Cys60.

Belongs to the metallothionein superfamily. Type 1 family. As to quaternary structure, interacts with EOLA1.

Functionally, metallothioneins have a high content of cysteine residues that bind various heavy metals; these proteins are transcriptionally regulated by both heavy metals and glucocorticoids. This chain is Metallothionein-2, found in Homo sapiens (Human).